The following is a 362-amino-acid chain: Phosphoserine aminotransferase (362 aa).

Arg-42 provides a ligand contact to L-glutamate. Pyridoxal 5'-phosphate-binding positions include 76 to 77, Trp-102, Thr-152, Asp-172, and Gln-195; that span reads AR. Lys-196 carries the N6-(pyridoxal phosphate)lysine modification. 237–238 is a binding site for pyridoxal 5'-phosphate; sequence NT.

Belongs to the class-V pyridoxal-phosphate-dependent aminotransferase family. SerC subfamily. As to quaternary structure, homodimer. It depends on pyridoxal 5'-phosphate as a cofactor.

The protein localises to the cytoplasm. It carries out the reaction O-phospho-L-serine + 2-oxoglutarate = 3-phosphooxypyruvate + L-glutamate. The catalysed reaction is 4-(phosphooxy)-L-threonine + 2-oxoglutarate = (R)-3-hydroxy-2-oxo-4-phosphooxybutanoate + L-glutamate. It participates in amino-acid biosynthesis; L-serine biosynthesis; L-serine from 3-phospho-D-glycerate: step 2/3. It functions in the pathway cofactor biosynthesis; pyridoxine 5'-phosphate biosynthesis; pyridoxine 5'-phosphate from D-erythrose 4-phosphate: step 3/5. Catalyzes the reversible conversion of 3-phosphohydroxypyruvate to phosphoserine and of 3-hydroxy-2-oxo-4-phosphonooxybutanoate to phosphohydroxythreonine. This chain is Phosphoserine aminotransferase, found in Haemophilus influenzae (strain ATCC 51907 / DSM 11121 / KW20 / Rd).